Reading from the N-terminus, the 207-residue chain is Octanoyltransferase (207 aa).

The BPL/LPL catalytic domain maps to 27–203; the sequence is ASTEDELWVV…HLETQFTPKA (177 aa). Residues 66–73, 133–135, and 146–148 each bind substrate; these read RGGQITYH, SLG, and GLA. The Acyl-thioester intermediate role is filled by Cys164.

It belongs to the LipB family.

The protein localises to the cytoplasm. The enzyme catalyses octanoyl-[ACP] + L-lysyl-[protein] = N(6)-octanoyl-L-lysyl-[protein] + holo-[ACP] + H(+). It participates in protein modification; protein lipoylation via endogenous pathway; protein N(6)-(lipoyl)lysine from octanoyl-[acyl-carrier-protein]: step 1/2. Its function is as follows. Catalyzes the transfer of endogenously produced octanoic acid from octanoyl-acyl-carrier-protein onto the lipoyl domains of lipoate-dependent enzymes. Lipoyl-ACP can also act as a substrate although octanoyl-ACP is likely to be the physiological substrate. The chain is Octanoyltransferase from Neisseria meningitidis serogroup C / serotype 2a (strain ATCC 700532 / DSM 15464 / FAM18).